A 252-amino-acid chain; its full sequence is Trans-aconitate 2-methyltransferase (252 aa).

Belongs to the methyltransferase superfamily. Tam family.

Its subcellular location is the cytoplasm. The enzyme catalyses trans-aconitate + S-adenosyl-L-methionine = (E)-3-(methoxycarbonyl)pent-2-enedioate + S-adenosyl-L-homocysteine. In terms of biological role, catalyzes the S-adenosylmethionine monomethyl esterification of trans-aconitate. The sequence is that of Trans-aconitate 2-methyltransferase from Escherichia coli O17:K52:H18 (strain UMN026 / ExPEC).